The following is a 400-amino-acid chain: tRNA(Ile)-lysidine synthase (400 aa).

ATP is bound at residue 25 to 30 (SGGVDS).

This sequence belongs to the tRNA(Ile)-lysidine synthase family.

It is found in the cytoplasm. The catalysed reaction is cytidine(34) in tRNA(Ile2) + L-lysine + ATP = lysidine(34) in tRNA(Ile2) + AMP + diphosphate + H(+). Its function is as follows. Ligates lysine onto the cytidine present at position 34 of the AUA codon-specific tRNA(Ile) that contains the anticodon CAU, in an ATP-dependent manner. Cytidine is converted to lysidine, thus changing the amino acid specificity of the tRNA from methionine to isoleucine. The chain is tRNA(Ile)-lysidine synthase from Francisella philomiragia subsp. philomiragia (strain ATCC 25017 / CCUG 19701 / FSC 153 / O#319-036).